Consider the following 64-residue polypeptide: DNA gyrase inhibitor YacG (64 aa).

Residues cysteine 10, cysteine 13, cysteine 29, and cysteine 33 each contribute to the Zn(2+) site.

Belongs to the DNA gyrase inhibitor YacG family. Interacts with GyrB. Zn(2+) is required as a cofactor.

Functionally, inhibits all the catalytic activities of DNA gyrase by preventing its interaction with DNA. Acts by binding directly to the C-terminal domain of GyrB, which probably disrupts DNA binding by the gyrase. The protein is DNA gyrase inhibitor YacG of Pectobacterium carotovorum subsp. carotovorum (strain PC1).